We begin with the raw amino-acid sequence, 314 residues long: Hydroxyacyl-coenzyme A dehydrogenase, mitochondrial (314 aa).

Residues 1–12 (MAFVTRQFVRSM) constitute a mitochondrion transit peptide. NAD(+) is bound by residues 34–39 (GGGLMG) and Asp-57. A CoA-binding site is contributed by Ser-73. Residue Lys-75 is modified to N6-acetyllysine. Residue Lys-80 participates in CoA binding. Lys-80 is modified (N6-succinyllysine). Residues Lys-81 and Lys-87 each carry the N6-acetyllysine; alternate modification. An N6-succinyllysine; alternate mark is found at Lys-81 and Lys-87. Glu-122 lines the NAD(+) pocket. Lys-125 bears the N6-acetyllysine mark. Residue Lys-127 coordinates NAD(+). An N6-(2-hydroxyisobutyryl)lysine modification is found at Lys-127. Lys-136 is subject to N6-acetyllysine; alternate. Lys-136 bears the N6-succinyllysine; alternate mark. NAD(+) contacts are provided by Ser-149 and Asn-173. Ser-149 is a binding site for CoA. Residue Lys-179 is modified to N6-acetyllysine. N6-acetyllysine; alternate occurs at positions 185, 192, and 202. Residues Lys-185, Lys-192, and Lys-202 each carry the N6-succinyllysine; alternate modification. N6-succinyllysine is present on Lys-206. Lys-212 and Lys-241 each carry N6-acetyllysine; alternate. Residues Lys-212 and Lys-241 each carry the N6-succinyllysine; alternate modification. Lys-305 is an NAD(+) binding site. Lys-312 carries the N6-acetyllysine; alternate modification. N6-succinyllysine; alternate is present on Lys-312.

The protein belongs to the 3-hydroxyacyl-CoA dehydrogenase family. As to quaternary structure, homodimer. Interacts with GLUD1; this interaction inhibits the activation of glutamate dehydrogenase 1 (GLUD1). Post-translationally, succinylation at Lys-81, adjacent to a coenzyme A binding site. Desuccinylated by SIRT5.

It is found in the mitochondrion matrix. The catalysed reaction is a (3S)-3-hydroxyacyl-CoA + NAD(+) = a 3-oxoacyl-CoA + NADH + H(+). It carries out the reaction (3S)-3-hydroxybutanoyl-CoA + NAD(+) = acetoacetyl-CoA + NADH + H(+). It catalyses the reaction (3S)-hydroxydecanoyl-CoA + NAD(+) = 3-oxodecanoyl-CoA + NADH + H(+). The enzyme catalyses (3S)-hydroxyhexadecanoyl-CoA + NAD(+) = 3-oxohexadecanoyl-CoA + NADH + H(+). Its pathway is lipid metabolism; fatty acid beta-oxidation. In terms of biological role, mitochondrial fatty acid beta-oxidation enzyme that catalyzes the third step of the beta-oxidation cycle for medium and short-chain 3-hydroxy fatty acyl-CoAs (C4 to C10). Plays a role in the control of insulin secretion by inhibiting the activation of glutamate dehydrogenase 1 (GLUD1), an enzyme that has an important role in regulating amino acid-induced insulin secretion. Plays a role in the maintenance of normal spermatogenesis through the reduction of fatty acid accumulation in the testes. This chain is Hydroxyacyl-coenzyme A dehydrogenase, mitochondrial (Hadh), found in Rattus norvegicus (Rat).